The sequence spans 272 residues: Ethanolamine ammonia-lyase small subunit (272 aa).

Positions 161, 182, and 211 each coordinate adenosylcob(III)alamin.

It belongs to the EutC family. In terms of assembly, the basic unit is a heterodimer which dimerizes to form tetramers. The heterotetramers trimerize; 6 large subunits form a core ring with 6 small subunits projecting outwards. Adenosylcob(III)alamin serves as cofactor.

It localises to the bacterial microcompartment. The enzyme catalyses ethanolamine = acetaldehyde + NH4(+). It participates in amine and polyamine degradation; ethanolamine degradation. Functionally, catalyzes the deamination of various vicinal amino-alcohols to oxo compounds. Allows this organism to utilize ethanolamine as the sole source of nitrogen and carbon in the presence of external vitamin B12. In Xanthomonas campestris pv. campestris (strain ATCC 33913 / DSM 3586 / NCPPB 528 / LMG 568 / P 25), this protein is Ethanolamine ammonia-lyase small subunit.